The primary structure comprises 254 residues: Small ribosomal subunit protein uS5 (254 aa).

Over residues 1 to 10 the composition is skewed to polar residues; sequence MSAPEAQQQK. Residues 1-34 are disordered; the sequence is MSAPEAQQQKRGGFGGRNRGRPNRRGPRNTEEKG. An N-acetylserine modification is found at serine 2. The residue at position 11 (arginine 11) is an Asymmetric dimethylarginine; by HMT1; alternate. At arginine 11 the chain carries Omega-N-methylarginine; by HMT1; alternate. Arginine 17 carries the post-translational modification Omega-N-methylarginine; by HMT1. Positions 18–27 are enriched in basic residues; that stretch reads NRGRPNRRGP. A Glycyl lysine isopeptide (Lys-Gly) (interchain with G-Cter in ubiquitin) cross-link involves residue lysine 33. The region spanning 76–139 is the S5 DRBM domain; it reads LQDEVMNIKP…IIAKLSVIPI (64 aa).

The protein belongs to the universal ribosomal protein uS5 family. Component of the small ribosomal subunit (SSU). Mature yeast ribosomes consist of a small (40S) and a large (60S) subunit. The 40S small subunit contains 1 molecule of ribosomal RNA (18S rRNA) and 33 different proteins (encoded by 57 genes). The large 60S subunit contains 3 rRNA molecules (25S, 5.8S and 5S rRNA) and 46 different proteins (encoded by 81 genes). Interacts with snoRNA U3. Interacts with MPP10. Component of the ribosomal small subunit (SSU) processome composed of at least 40 protein subunits and snoRNA U3. Post-translationally, N-terminally acetylated by acetyltransferase NatA.

The protein localises to the cytoplasm. It is found in the nucleus. It localises to the nucleolus. Its function is as follows. Component of the ribosome, a large ribonucleoprotein complex responsible for the synthesis of proteins in the cell. The small ribosomal subunit (SSU) binds messenger RNAs (mRNAs) and translates the encoded message by selecting cognate aminoacyl-transfer RNA (tRNA) molecules. The large subunit (LSU) contains the ribosomal catalytic site termed the peptidyl transferase center (PTC), which catalyzes the formation of peptide bonds, thereby polymerizing the amino acids delivered by tRNAs into a polypeptide chain. The nascent polypeptides leave the ribosome through a tunnel in the LSU and interact with protein factors that function in enzymatic processing, targeting, and the membrane insertion of nascent chains at the exit of the ribosomal tunnel. uS5 is important for the assembly and function of the 40S ribosomal subunit. Mutations in this protein affects the control of translational fidelity. Involved in nucleolar processing of pre-18S ribosomal RNA and ribosome assembly. The chain is Small ribosomal subunit protein uS5 from Saccharomyces cerevisiae (strain ATCC 204508 / S288c) (Baker's yeast).